A 328-amino-acid chain; its full sequence is Ferredoxin--NADP reductase 2 (328 aa).

Residues E37, Q45, Y50, V90, F124, D285, and T325 each contribute to the FAD site.

It belongs to the ferredoxin--NADP reductase type 2 family. Homodimer. Requires FAD as cofactor.

The enzyme catalyses 2 reduced [2Fe-2S]-[ferredoxin] + NADP(+) + H(+) = 2 oxidized [2Fe-2S]-[ferredoxin] + NADPH. This chain is Ferredoxin--NADP reductase 2, found in Latilactobacillus sakei subsp. sakei (strain 23K) (Lactobacillus sakei subsp. sakei).